We begin with the raw amino-acid sequence, 194 residues long: dCTP deaminase, dUMP-forming (194 aa).

DCTP contacts are provided by residues 105-110 (RSSMGR), D123, 131-133 (TLE), Q152, Y166, K174, and Q178. The active-site Proton donor/acceptor is the E133.

Belongs to the dCTP deaminase family. Homotrimer.

The enzyme catalyses dCTP + 2 H2O = dUMP + NH4(+) + diphosphate. It participates in pyrimidine metabolism; dUMP biosynthesis; dUMP from dCTP: step 1/1. Bifunctional enzyme that catalyzes both the deamination of dCTP to dUTP and the hydrolysis of dUTP to dUMP without releasing the toxic dUTP intermediate. This chain is dCTP deaminase, dUMP-forming, found in Methanobrevibacter smithii (strain ATCC 35061 / DSM 861 / OCM 144 / PS).